The following is a 186-amino-acid chain: Large ribosomal subunit protein uL5 (186 aa).

Belongs to the universal ribosomal protein uL5 family. In terms of assembly, part of the 50S ribosomal subunit; part of the 5S rRNA/L5/L18/L25 subcomplex. Contacts the 5S rRNA and the P site tRNA. Forms a bridge to the 30S subunit in the 70S ribosome.

This is one of the proteins that bind and probably mediate the attachment of the 5S RNA into the large ribosomal subunit, where it forms part of the central protuberance. In the 70S ribosome it contacts protein S13 of the 30S subunit (bridge B1b), connecting the 2 subunits; this bridge is implicated in subunit movement. Contacts the P site tRNA; the 5S rRNA and some of its associated proteins might help stabilize positioning of ribosome-bound tRNAs. The polypeptide is Large ribosomal subunit protein uL5 (Maricaulis maris (strain MCS10) (Caulobacter maris)).